A 274-amino-acid polypeptide reads, in one-letter code: Kit ligand (274 aa).

The N-terminal stretch at 1 to 25 (MKKTQTWIITCIYLQLLLFNPLVRT) is a signal peptide. Glutamine 26 carries the post-translational modification Pyrrolidone carboxylic acid. Residues 26–215 (QGICRNRVTD…SDSIEDSSLQ (190 aa)) lie on the Extracellular side of the membrane. Cystine bridges form between cysteine 29–cysteine 114 and cysteine 68–cysteine 164. N-linked (GlcNAc...) asparagine glycosylation is found at asparagine 90, asparagine 97, asparagine 145, and asparagine 196. A helical membrane pass occupies residues 216–238 (WAAVALPAFFSLVIGFAFGALYW). Residues 239 to 274 (KKKQPNLTRTVENIQINEEDNEISMLQEKEREFQEV) are Cytoplasmic-facing.

The protein belongs to the SCF family. In terms of assembly, homodimer, non-covalently linked. Heterotetramer with KIT, binding two KIT molecules; thereby mediates KIT dimerization and subsequent activation by autophosphorylation. In terms of processing, a soluble form is produced by proteolytic processing of the extracellular domain.

The protein localises to the cytoplasm. The protein resides in the cytoskeleton. Its subcellular location is the cell membrane. It localises to the cell projection. It is found in the lamellipodium. The protein localises to the filopodium. The protein resides in the secreted. In terms of biological role, ligand for the receptor-type protein-tyrosine kinase KIT. Plays an essential role in the regulation of cell survival and proliferation, hematopoiesis, stem cell maintenance, gametogenesis, mast cell development, migration and function, and in melanogenesis. KITLG/SCF binding can activate several signaling pathways. Promotes phosphorylation of PIK3R1, the regulatory subunit of phosphatidylinositol 3-kinase, and subsequent activation of the kinase AKT1. KITLG/SCF and KIT also transmit signals via GRB2 and activation of RAS, RAF1 and the MAP kinases MAPK1/ERK2 and/or MAPK3/ERK1. KITLG/SCF and KIT promote activation of STAT family members STAT1, STAT3 and STAT5. KITLG/SCF and KIT promote activation of PLCG1, leading to the production of the cellular signaling molecules diacylglycerol and inositol 1,4,5-trisphosphate. KITLG/SCF acts synergistically with other cytokines, probably interleukins. In Sus scrofa (Pig), this protein is Kit ligand (KITLG).